The primary structure comprises 323 residues: Aspartate carbamoyltransferase catalytic subunit (323 aa).

2 residues coordinate carbamoyl phosphate: arginine 55 and threonine 56. Position 83 (lysine 83) interacts with L-aspartate. The carbamoyl phosphate site is built by arginine 105, histidine 133, and glutamine 136. Positions 166 and 220 each coordinate L-aspartate. Glycine 261 and proline 262 together coordinate carbamoyl phosphate.

Belongs to the aspartate/ornithine carbamoyltransferase superfamily. ATCase family. In terms of assembly, heterododecamer (2C3:3R2) of six catalytic PyrB chains organized as two trimers (C3), and six regulatory PyrI chains organized as three dimers (R2).

The enzyme catalyses carbamoyl phosphate + L-aspartate = N-carbamoyl-L-aspartate + phosphate + H(+). The protein operates within pyrimidine metabolism; UMP biosynthesis via de novo pathway; (S)-dihydroorotate from bicarbonate: step 2/3. In terms of biological role, catalyzes the condensation of carbamoyl phosphate and aspartate to form carbamoyl aspartate and inorganic phosphate, the committed step in the de novo pyrimidine nucleotide biosynthesis pathway. The protein is Aspartate carbamoyltransferase catalytic subunit of Acidothermus cellulolyticus (strain ATCC 43068 / DSM 8971 / 11B).